A 1029-amino-acid polypeptide reads, in one-letter code: 2-oxoglutarate dehydrogenase, mitochondrial (1029 aa).

Thiamine diphosphate-binding residues include Arg-317, Asp-415, Asn-448, Ile-450, and Gln-676. 3 residues coordinate Mg(2+): Asp-415, Asn-448, and Ile-450.

The protein belongs to the alpha-ketoglutarate dehydrogenase family. As to quaternary structure, homodimer. Component of the 2-oxoglutarate dehydrogenase complex. It depends on thiamine diphosphate as a cofactor. Mg(2+) serves as cofactor.

The protein localises to the mitochondrion matrix. The catalysed reaction is N(6)-[(R)-lipoyl]-L-lysyl-[protein] + 2-oxoglutarate + H(+) = N(6)-[(R)-S(8)-succinyldihydrolipoyl]-L-lysyl-[protein] + CO2. The 2-oxoglutarate dehydrogenase complex catalyzes the overall conversion of 2-oxoglutarate to succinyl-CoA and CO(2). It contains multiple copies of three enzymatic components: 2-oxoglutarate dehydrogenase (E1), dihydrolipoamide succinyltransferase (E2) and lipoamide dehydrogenase (E3). The chain is 2-oxoglutarate dehydrogenase, mitochondrial (ogdh-1) from Caenorhabditis elegans.